The following is a 277-amino-acid chain: Probable endonuclease 4 (277 aa).

Zn(2+)-binding residues include H67, H107, E141, D173, H176, H207, D220, H222, and E252.

This sequence belongs to the AP endonuclease 2 family. Requires Zn(2+) as cofactor.

It carries out the reaction Endonucleolytic cleavage to 5'-phosphooligonucleotide end-products.. Functionally, endonuclease IV plays a role in DNA repair. It cleaves phosphodiester bonds at apurinic or apyrimidinic (AP) sites, generating a 3'-hydroxyl group and a 5'-terminal sugar phosphate. This is Probable endonuclease 4 from Finegoldia magna (strain ATCC 29328 / DSM 20472 / WAL 2508) (Peptostreptococcus magnus).